Reading from the N-terminus, the 300-residue chain is Protoheme IX farnesyltransferase (300 aa).

8 consecutive transmembrane segments (helical) span residues 24 to 44 (VTQL…PGMV), 46 to 66 (WHVL…AFAI), 94 to 114 (PQIL…LYTF), 118 to 138 (LTMW…TLLL), 146 to 166 (IVIG…AVTG), 172 to 192 (AWIL…VLAL), 224 to 244 (VILF…VVYL), and 278 to 298 (IVYL…RPLL).

It belongs to the UbiA prenyltransferase family. Protoheme IX farnesyltransferase subfamily.

Its subcellular location is the cell inner membrane. It catalyses the reaction heme b + (2E,6E)-farnesyl diphosphate + H2O = Fe(II)-heme o + diphosphate. It participates in porphyrin-containing compound metabolism; heme O biosynthesis; heme O from protoheme: step 1/1. Converts heme B (protoheme IX) to heme O by substitution of the vinyl group on carbon 2 of heme B porphyrin ring with a hydroxyethyl farnesyl side group. The chain is Protoheme IX farnesyltransferase from Burkholderia ambifaria (strain ATCC BAA-244 / DSM 16087 / CCUG 44356 / LMG 19182 / AMMD) (Burkholderia cepacia (strain AMMD)).